The sequence spans 342 residues: S-adenosylmethionine:tRNA ribosyltransferase-isomerase (342 aa).

The protein belongs to the QueA family. As to quaternary structure, monomer.

The protein resides in the cytoplasm. The enzyme catalyses 7-aminomethyl-7-carbaguanosine(34) in tRNA + S-adenosyl-L-methionine = epoxyqueuosine(34) in tRNA + adenine + L-methionine + 2 H(+). Its pathway is tRNA modification; tRNA-queuosine biosynthesis. Its function is as follows. Transfers and isomerizes the ribose moiety from AdoMet to the 7-aminomethyl group of 7-deazaguanine (preQ1-tRNA) to give epoxyqueuosine (oQ-tRNA). In Brevibacillus brevis (strain 47 / JCM 6285 / NBRC 100599), this protein is S-adenosylmethionine:tRNA ribosyltransferase-isomerase.